Consider the following 234-residue polypeptide: Peroxisomal coenzyme A diphosphatase ndx-8 (234 aa).

The Nudix hydrolase domain occupies 27 to 162; sequence EQDAGVLILL…TFLIDEFYMV (136 aa). Residues 66-90 carry the Nudix box motif; sequence GGMMDDEDGQNVRRTAIREAYEEVG. Glutamate 84 and glutamate 88 together coordinate Mg(2+). A helical transmembrane segment spans residues 170–190; it reads YPTTYGVTALMCIVVAIGLLG. The short motif at 232 to 234 is the Microbody targeting signal element; sequence SKI.

It belongs to the Nudix hydrolase family. Requires Mg(2+) as cofactor. It depends on Mn(2+) as a cofactor.

The protein resides in the peroxisome membrane. Its function is as follows. Coenzyme A diphosphatase which mediates the cleavage of CoA into 3',5'-ADP and 4'-phosphopantetheine. The polypeptide is Peroxisomal coenzyme A diphosphatase ndx-8 (ndx-8) (Caenorhabditis elegans).